The sequence spans 241 residues: DNA repair protein RecO (241 aa).

The protein belongs to the RecO family.

In terms of biological role, involved in DNA repair and RecF pathway recombination. This Phocaeicola vulgatus (strain ATCC 8482 / DSM 1447 / JCM 5826 / CCUG 4940 / NBRC 14291 / NCTC 11154) (Bacteroides vulgatus) protein is DNA repair protein RecO.